The sequence spans 340 residues: tRNA N6-adenosine threonylcarbamoyltransferase (340 aa).

Fe cation-binding residues include His-114 and His-118. Residues 140–144, Asp-173, Gly-186, Asp-190, and Asn-281 each bind substrate; that span reads TISGG. Residue Asp-309 coordinates Fe cation.

The protein belongs to the KAE1 / TsaD family. It depends on Fe(2+) as a cofactor.

It is found in the cytoplasm. The catalysed reaction is L-threonylcarbamoyladenylate + adenosine(37) in tRNA = N(6)-L-threonylcarbamoyladenosine(37) in tRNA + AMP + H(+). In terms of biological role, required for the formation of a threonylcarbamoyl group on adenosine at position 37 (t(6)A37) in tRNAs that read codons beginning with adenine. Is involved in the transfer of the threonylcarbamoyl moiety of threonylcarbamoyl-AMP (TC-AMP) to the N6 group of A37, together with TsaE and TsaB. TsaD likely plays a direct catalytic role in this reaction. In Christiangramia forsetii (strain DSM 17595 / CGMCC 1.15422 / KT0803) (Gramella forsetii), this protein is tRNA N6-adenosine threonylcarbamoyltransferase.